The sequence spans 490 residues: Endoglucanase 13 (490 aa).

An N-terminal signal peptide occupies residues 1-26 (MSQLKNGSSQCLWTSICIVLIVMSMA). N-linked (GlcNAc...) asparagine glycosylation occurs at Asn6. The active-site Nucleophile is Asp86. Residues His412, Asp464, and Glu473 contribute to the active site.

Belongs to the glycosyl hydrolase 9 (cellulase E) family.

The protein localises to the secreted. The catalysed reaction is Endohydrolysis of (1-&gt;4)-beta-D-glucosidic linkages in cellulose, lichenin and cereal beta-D-glucans.. The chain is Endoglucanase 13 from Arabidopsis thaliana (Mouse-ear cress).